The primary structure comprises 556 residues: Formate--tetrahydrofolate ligase 1 (556 aa).

Residue 65–72 coordinates ATP; it reads TPAGEGKS.

Belongs to the formate--tetrahydrofolate ligase family.

It catalyses the reaction (6S)-5,6,7,8-tetrahydrofolate + formate + ATP = (6R)-10-formyltetrahydrofolate + ADP + phosphate. Its pathway is one-carbon metabolism; tetrahydrofolate interconversion. The polypeptide is Formate--tetrahydrofolate ligase 1 (Streptococcus pyogenes serotype M28 (strain MGAS6180)).